The sequence spans 341 residues: Large ribosomal subunit protein uL3 (341 aa).

Disordered regions lie at residues methionine 1–serine 31 and histidine 234–glycine 261.

This sequence belongs to the universal ribosomal protein uL3 family. In terms of assembly, part of the 50S ribosomal subunit. Forms a cluster with proteins L14 and L24e.

Functionally, one of the primary rRNA binding proteins, it binds directly near the 3'-end of the 23S rRNA, where it nucleates assembly of the 50S subunit. This is Large ribosomal subunit protein uL3 from Metallosphaera sedula (strain ATCC 51363 / DSM 5348 / JCM 9185 / NBRC 15509 / TH2).